The primary structure comprises 847 residues: Glucans biosynthesis glucosyltransferase H (847 aa).

Residues 1–138 (MNKTTEYIDA…KWRTVGTIRR (138 aa)) lie on the Cytoplasmic side of the membrane. A helical membrane pass occupies residues 139 to 156 (YILLILTLAQTVVATWYM). Over 157 to 193 (KTILPYQGWALINPMDMVGQDIWVSFMQLLPYMLQTG) the chain is Periplasmic. The helical transmembrane segment at 194–216 (ILILFAVLFCWVSAGFWTALMGF) threads the bilayer. The Cytoplasmic portion of the chain corresponds to 217 to 511 (LQLLIGRDKY…LVKGMHPVHR (295 aa)). Residues 512-534 (AVFLTGVMSYLSAPLWFMFLALS) form a helical membrane-spanning segment. Topologically, residues 535–567 (TALQVVHALTEPQYFLQPRQLFPVWPQWRPELA) are periplasmic. The helical transmembrane segment at 568–590 (IALFASTMVLLFLPKLLSIMLIW) threads the bilayer. At 591 to 602 (CKGTKEYGGFWR) the chain is on the cytoplasmic side. A helical membrane pass occupies residues 603–625 (VTLSLLLEVLFSVLLAPVRMLFH). Residues 626–679 (TVFVVSAFLGWEVVWNSPQRDDDSTPWGEAFMRHGSQLLLGLVWAVGMAWLDLR) lie on the Periplasmic side of the membrane. Residues 680–702 (FLFWLAPIVFSLILSPFVSVISS) traverse the membrane as a helical segment. The Cytoplasmic segment spans residues 703-847 (RSTVGLRTKR…ALQGRTSSAR (145 aa)).

This sequence belongs to the glycosyltransferase 2 family. OpgH subfamily.

It localises to the cell inner membrane. The protein operates within glycan metabolism; osmoregulated periplasmic glucan (OPG) biosynthesis. Functionally, involved in the biosynthesis of osmoregulated periplasmic glucans (OPGs). This is Glucans biosynthesis glucosyltransferase H from Salmonella typhimurium (strain LT2 / SGSC1412 / ATCC 700720).